The following is an 81-amino-acid chain: Small serum protein 4 (81 aa).

An N-terminal signal peptide occupies residues Met1–Gly19. Intrachain disulfides connect Cys21–Cys74, Cys41–Cys66, and Cys64–Cys73.

It belongs to the beta-microseminoprotein family.

It is found in the secreted. Its function is as follows. Shows an slight inhibitory effect toward the metalloproteinase brevilysin H6, but does not inhibit the metalloproteinases thermolysin, HR1A and HR1B. The chain is Small serum protein 4 from Protobothrops flavoviridis (Habu).